Reading from the N-terminus, the 107-residue chain is Acidic phospholipase A2 2 (107 aa).

Cystine bridges form between Cys-26/Cys-100, Cys-28/Cys-38, Cys-37/Cys-82, Cys-43/Cys-107, Cys-44/Cys-75, and Cys-62/Cys-73. The Ca(2+) site is built by Tyr-27, Gly-29, and Gly-31. The active site involves His-41. Position 42 (Asp-42) interacts with Ca(2+). Residue Asp-76 is part of the active site.

Ca(2+) serves as cofactor. Expressed by the venom gland.

The protein resides in the secreted. The catalysed reaction is a 1,2-diacyl-sn-glycero-3-phosphocholine + H2O = a 1-acyl-sn-glycero-3-phosphocholine + a fatty acid + H(+). Its function is as follows. PLA2 catalyzes the calcium-dependent hydrolysis of the 2-acyl groups in 3-sn-phosphoglycerides. The protein is Acidic phospholipase A2 2 of Bothrops insularis (Golden lancehead).